Consider the following 481-residue polypeptide: Calcium uptake protein 1, mitochondrial (481 aa).

A mitochondrion-targeting transit peptide spans 1–33 (MFRLHSLSALAELAVGSRCYHGGSQPTQMKRRL). Residues 58 to 82 (ESPPSVNNPKSELGDKGKNKDEGEV) are disordered. The segment covering 69-82 (ELGDKGKNKDEGEV) has biased composition (basic and acidic residues). Residues 101-112 (KKKKRSGFRDRK) are polybasic region. Residue Ser-124 is modified to Phosphoserine. A k/R-ring region spans residues 128-131 (KIFR). The EF-hand 1 domain maps to 220-255 (TPQRNFEIAFKMFDLNGDGEVDMEEFEQASCPGNII). Ca(2+) is bound by residues Asp-233, Asn-235, Asp-237, Glu-239, and Glu-244. The segment at 264–268 (RHRDR) is k/R-ring. The region spanning 413–448 (LSDHVCDVVFALFDCDGNGELSNKEFVSIMKQRLMR) is the EF-hand 2 domain. Ca(2+)-binding residues include Asp-426, Asp-428, Asn-430, Glu-432, and Glu-437. Arg-460 carries the post-translational modification Asymmetric dimethylarginine. Positions 460-470 (RLMQAMWKCAQ) are C-helix region.

It belongs to the MICU1 family. MICU1 subfamily. As to quaternary structure, heterodimer; disulfide-linked; heterodimerizes with MICU2 or MICU3. Homodimer; disulfide-linked. Component of the uniplex complex, composed of MCU, EMRE/SMDT1, MICU1 and MICU2 (or MICU3) in a 4:4:1:1 stoichiometry. The composition of calcium sensors within the uniplex complex can differ depending on tissues: a MICU1 homodimer can be present instead of the MICU1-MICU2 heterodimer in skeletal-muscle and kidney. MICU1 is recruited to the uniplex complex by EMRE/SMDT1, and it associates with MCU at low calcium levels, occluding the pore of the MCU channel. Associates with the MICOS complex. Interacts with SLC25A23. Interacts with CHCHD4/MIA40; which introduces the interchain disulfide bond with MICU2. Interacts (when methylated) with UCP2; leading to decrease the calcium sensitivity of MICU1. Post-translationally, phosphorylation at Ser-124 by AKT1 impairs its maturation and stability. In terms of processing, asymmetric dimethylation at Arg-460 by PRMT1 decreases the calcium sensitivity of MICU1 by promoting interaction with UCP2. Degraded by YME1L1 when not complexed as homodimer or heterodimer. Not degraded when complexed as homodimer or heterodimer; the presence of the interchain disulfide bond protecting MICU1 from degradation by YME1L1.

Its subcellular location is the mitochondrion intermembrane space. The protein localises to the mitochondrion inner membrane. In terms of biological role, calcium sensor of the mitochondrial calcium uniporter (MCU) channel, which senses calcium level via its EF-hand domains. MICU1 and MICU2 (or MICU3) form a disulfide-linked heterodimer that stimulates and inhibits MCU activity, depending on the concentration of calcium. At low calcium levels, MICU1 occludes the pore of the MCU channel, preventing mitochondrial calcium uptake. At higher calcium levels, calcium-binding to MICU1 and MICU2 (or MICU3) induces a conformational change that weakens MCU-MICU1 interactions and moves the MICU1-MICU2 heterodimer away from the pore, allowing calcium permeation through the MCU channel. Also required to protect against manganese toxicity by preventing manganese uptake by MCU: mechanistically, manganese-binding to its EF-hand domains does not induce any conformational change, maintaining MCU pore occlusion. Acts as a regulator of mitochondrial cristae structure independently of its ability to regulate the mitochondrial calcium uniporter channel. Regulates glucose-dependent insulin secretion in pancreatic beta-cells by regulating mitochondrial calcium uptake. Induces T-helper 1-mediated autoreactivity, which is accompanied by the release of IFNG. The sequence is that of Calcium uptake protein 1, mitochondrial (MICU1) from Ailuropoda melanoleuca (Giant panda).